A 139-amino-acid polypeptide reads, in one-letter code: ATP synthase epsilon chain (139 aa).

This sequence belongs to the ATPase epsilon chain family. As to quaternary structure, F-type ATPases have 2 components, CF(1) - the catalytic core - and CF(0) - the membrane proton channel. CF(1) has five subunits: alpha(3), beta(3), gamma(1), delta(1), epsilon(1). CF(0) has three main subunits: a, b and c.

Its subcellular location is the cell inner membrane. Its function is as follows. Produces ATP from ADP in the presence of a proton gradient across the membrane. This chain is ATP synthase epsilon chain, found in Actinobacillus pleuropneumoniae serotype 7 (strain AP76).